A 99-amino-acid polypeptide reads, in one-letter code: UPF0751 protein BAMEG_A0107 (99 aa).

This sequence belongs to the UPF0751 family.

In Bacillus anthracis (strain CDC 684 / NRRL 3495), this protein is UPF0751 protein BAMEG_A0107.